We begin with the raw amino-acid sequence, 2071 residues long: GTPase-activating protein BEM2 (2071 aa).

Disordered regions lie at residues 1–115 (MPLK…QAHK) and 171–195 (AAPA…SERP). Composition is skewed to low complexity over residues 16–31 (PQSC…QSSC) and 42–55 (SSIS…SKNN). Residues 62–80 (SNGSVYSDETTLKTAQTHY) show a composition bias toward polar residues. Over residues 81-110 (TQQGQQAKPQQHTQQQQQQPQTPMQLQVPT) the composition is skewed to low complexity. Positions 181–191 (HQPTASLSSIG) are enriched in polar residues. The Ras-GEF domain maps to 471 to 738 (DTEKVANQIH…MEMSLKMEPP (268 aa)). A compositionally biased stretch (polar residues) spans 787-811 (PSTKNNNSSQASNRISQLSVNSTPH). Disordered stretches follow at residues 787-819 (PSTK…SSSA), 1645-1676 (RSVL…ARTS), and 1702-1738 (SVSS…GMGK). Composition is skewed to low complexity over residues 1656-1676 (SVSS…ARTS) and 1702-1726 (SVSS…ASPN). The 103-residue stretch at 1751–1853 (SGFTSSSSQY…WMKAITLSKR (103 aa)) folds into the PH domain. The region spanning 1872 to 2070 (VPVEDVCERE…HLIRNPEHYF (199 aa)) is the Rho-GAP domain.

Its function is as follows. GTPase-activating protein (GAP) for RHO proteins. Required for polarized growth and maintenance of cell polarity. The polypeptide is GTPase-activating protein BEM2 (BEM2) (Eremothecium gossypii (strain ATCC 10895 / CBS 109.51 / FGSC 9923 / NRRL Y-1056) (Yeast)).